A 252-amino-acid chain; its full sequence is Trans-aconitate 2-methyltransferase (252 aa).

It belongs to the methyltransferase superfamily. Tam family.

The protein resides in the cytoplasm. It catalyses the reaction trans-aconitate + S-adenosyl-L-methionine = (E)-3-(methoxycarbonyl)pent-2-enedioate + S-adenosyl-L-homocysteine. Functionally, catalyzes the S-adenosylmethionine monomethyl esterification of trans-aconitate. The sequence is that of Trans-aconitate 2-methyltransferase from Escherichia coli (strain ATCC 8739 / DSM 1576 / NBRC 3972 / NCIMB 8545 / WDCM 00012 / Crooks).